The primary structure comprises 76 residues: Small ribosomal subunit protein bS18 (76 aa).

This sequence belongs to the bacterial ribosomal protein bS18 family. In terms of assembly, part of the 30S ribosomal subunit. Forms a tight heterodimer with protein bS6.

In terms of biological role, binds as a heterodimer with protein bS6 to the central domain of the 16S rRNA, where it helps stabilize the platform of the 30S subunit. This is Small ribosomal subunit protein bS18 from Mesoplasma florum (strain ATCC 33453 / NBRC 100688 / NCTC 11704 / L1) (Acholeplasma florum).